Consider the following 202-residue polypeptide: Transmembrane 4 L6 family member 1 (202 aa).

Over Met1–Cys9 the chain is Cytoplasmic. The chain crosses the membrane as a helical span at residues Ile10–Phe30. At Pro31–Phe49 the chain is on the extracellular side. A helical membrane pass occupies residues Phe50–Leu70. The Cytoplasmic segment spans residues Glu71–Ser93. A helical transmembrane segment spans residues Val94–Gly114. Residues Leu115–Ser161 lie on the Extracellular side of the membrane. Residues Asn129 and Asn159 are each glycosylated (N-linked (GlcNAc...) asparagine). The helical transmembrane segment at Leu162–Ile182 threads the bilayer. Residues Asn183 to Cys202 are Cytoplasmic-facing.

Belongs to the L6 tetraspanin family. As to quaternary structure, present in high molecular weight complexes in tumor cells. Interacts with SDCBP2. As to expression, highly expressed in lung, breast, colon and ovarian carcinomas. It is also present on some normal cells, endothelial cells in particular.

The protein localises to the membrane. The polypeptide is Transmembrane 4 L6 family member 1 (TM4SF1) (Homo sapiens (Human)).